The chain runs to 361 residues: MADRKFNFCAGPSALPTEVLLQAQAELLDWRGKGLSIMEMSHRSDDFVAVAVEAERDFRELMSVPDNYKVLFVQGGAATQFASVPLNLLKLGAEADYIDTGIWSKKAIAEAGRYLKVNVAASAKDNGYACIPARSEWRLSESAGYVHYTPNETIGGVEFLDIPDVGDKPLVADMSSTILSRPVDISRFGVIYAGAQKNIGPAGLTLVIVREDLLGYASDSLPTMLNYKVASENDSMVNTPPTFSWYLAGLVFKWLKGKGGVQAMEAINCRKADKLYSYIDDSEFYANPIDLSCRSWMNVPFTLKDDRLDQKFLQEAEGAGLLNLQGHRSVGGMRASLYNALPEEAVDALIGFMQDFAGRNA.

An L-glutamate-binding site is contributed by Arg43. Positions 103, 153, 173, and 196 each coordinate pyridoxal 5'-phosphate. An N6-(pyridoxal phosphate)lysine modification is found at Lys197. A pyridoxal 5'-phosphate-binding site is contributed by 238–239 (NT).

Belongs to the class-V pyridoxal-phosphate-dependent aminotransferase family. SerC subfamily. In terms of assembly, homodimer. Pyridoxal 5'-phosphate is required as a cofactor.

It is found in the cytoplasm. It carries out the reaction O-phospho-L-serine + 2-oxoglutarate = 3-phosphooxypyruvate + L-glutamate. The catalysed reaction is 4-(phosphooxy)-L-threonine + 2-oxoglutarate = (R)-3-hydroxy-2-oxo-4-phosphooxybutanoate + L-glutamate. The protein operates within amino-acid biosynthesis; L-serine biosynthesis; L-serine from 3-phospho-D-glycerate: step 2/3. It functions in the pathway cofactor biosynthesis; pyridoxine 5'-phosphate biosynthesis; pyridoxine 5'-phosphate from D-erythrose 4-phosphate: step 3/5. In terms of biological role, catalyzes the reversible conversion of 3-phosphohydroxypyruvate to phosphoserine and of 3-hydroxy-2-oxo-4-phosphonooxybutanoate to phosphohydroxythreonine. The protein is Phosphoserine aminotransferase of Hahella chejuensis (strain KCTC 2396).